The sequence spans 436 residues: D-amino acid dehydrogenase (436 aa).

3-17 (IVVLGAGVVGVTSAY) is an FAD binding site.

Belongs to the DadA oxidoreductase family. FAD serves as cofactor.

It carries out the reaction a D-alpha-amino acid + A + H2O = a 2-oxocarboxylate + AH2 + NH4(+). Its pathway is amino-acid degradation; D-alanine degradation; NH(3) and pyruvate from D-alanine: step 1/1. Functionally, oxidative deamination of D-amino acids. This chain is D-amino acid dehydrogenase, found in Cereibacter sphaeroides (strain ATCC 17029 / ATH 2.4.9) (Rhodobacter sphaeroides).